The chain runs to 419 residues: Synaptosomal-associated protein 47 (419 aa).

2 consecutive t-SNARE coiled-coil homology domains span residues 108 to 170 (PQGA…LSEL) and 356 to 418 (VLQP…MRKL).

This sequence belongs to the SVAP1 family.

Functionally, may play a role in intracellular membrane fusion. The polypeptide is Synaptosomal-associated protein 47 (snap47) (Danio rerio (Zebrafish)).